A 326-amino-acid chain; its full sequence is Biotin synthase (326 aa).

Residues 48 to 277 (FGAGKVDLCS…SARIRMAGGR (230 aa)) enclose the Radical SAM core domain. [4Fe-4S] cluster is bound by residues Cys66, Cys70, and Cys73. Residues Ser110, Cys142, Cys202, and Arg272 each contribute to the [2Fe-2S] cluster site.

Belongs to the radical SAM superfamily. Biotin synthase family. Homodimer. It depends on [4Fe-4S] cluster as a cofactor. The cofactor is [2Fe-2S] cluster.

The enzyme catalyses (4R,5S)-dethiobiotin + (sulfur carrier)-SH + 2 reduced [2Fe-2S]-[ferredoxin] + 2 S-adenosyl-L-methionine = (sulfur carrier)-H + biotin + 2 5'-deoxyadenosine + 2 L-methionine + 2 oxidized [2Fe-2S]-[ferredoxin]. The protein operates within cofactor biosynthesis; biotin biosynthesis; biotin from 7,8-diaminononanoate: step 2/2. Its function is as follows. Catalyzes the conversion of dethiobiotin (DTB) to biotin by the insertion of a sulfur atom into dethiobiotin via a radical-based mechanism. This is Biotin synthase from Heliobacterium modesticaldum (strain ATCC 51547 / Ice1).